We begin with the raw amino-acid sequence, 264 residues long: Thymidylate synthase (264 aa).

Arginine 21 contributes to the dUMP binding site. Histidine 51 serves as a coordination point for (6R)-5,10-methylene-5,6,7,8-tetrahydrofolate. Position 126-127 (126-127) interacts with dUMP; the sequence is RR. Cysteine 146 functions as the Nucleophile in the catalytic mechanism. DUMP-binding positions include 166 to 169, asparagine 177, and 207 to 209; these read RSGD and HLY. Residue aspartate 169 participates in (6R)-5,10-methylene-5,6,7,8-tetrahydrofolate binding. Alanine 263 is a binding site for (6R)-5,10-methylene-5,6,7,8-tetrahydrofolate.

It belongs to the thymidylate synthase family. Bacterial-type ThyA subfamily. Homodimer.

It localises to the cytoplasm. The enzyme catalyses dUMP + (6R)-5,10-methylene-5,6,7,8-tetrahydrofolate = 7,8-dihydrofolate + dTMP. It functions in the pathway pyrimidine metabolism; dTTP biosynthesis. Functionally, catalyzes the reductive methylation of 2'-deoxyuridine-5'-monophosphate (dUMP) to 2'-deoxythymidine-5'-monophosphate (dTMP) while utilizing 5,10-methylenetetrahydrofolate (mTHF) as the methyl donor and reductant in the reaction, yielding dihydrofolate (DHF) as a by-product. This enzymatic reaction provides an intracellular de novo source of dTMP, an essential precursor for DNA biosynthesis. This is Thymidylate synthase from Brevibacillus brevis (strain 47 / JCM 6285 / NBRC 100599).